We begin with the raw amino-acid sequence, 101 residues long: MAKKSKIARNDRRRETVERYAARRAELKEVIRRPGTPEPERNRAVEELRRQPRDASATRVRNRDSVDGRPRGYLRRFGLSRVRMREQAHAGFLPGVTTSSW.

Positions 32-71 (RRPGTPEPERNRAVEELRRQPRDASATRVRNRDSVDGRPR) are disordered. Composition is skewed to basic and acidic residues over residues 38–53 (EPER…RQPR) and 61–70 (RNRDSVDGRP).

It belongs to the universal ribosomal protein uS14 family. In terms of assembly, part of the 30S ribosomal subunit. Contacts proteins S3 and S10.

In terms of biological role, binds 16S rRNA, required for the assembly of 30S particles and may also be responsible for determining the conformation of the 16S rRNA at the A site. The sequence is that of Small ribosomal subunit protein uS14A from Streptomyces griseus subsp. griseus (strain JCM 4626 / CBS 651.72 / NBRC 13350 / KCC S-0626 / ISP 5235).